The chain runs to 201 residues: Ras-related protein Rab-9A (201 aa).

At Ala-2 the chain carries N-acetylalanine. Gly-17 contributes to the GDP binding site. Positions 17, 18, 19, 20, 21, 22, 34, 38, and 39 each coordinate GTP. Gly-19, Lys-20, Ser-21, and Ser-22 together coordinate GDP. Ser-21 lines the Mg(2+) pocket. Positions 31–42 match the Switch 1 motif; sequence KFDTQLFHTIGV. Residues Thr-39 and Asp-62 each contribute to the Mg(2+) site. Residues 64–78 carry the Switch 2 motif; the sequence is AGQERFRSLRTPFYR. Residues Gly-65, Asn-124, Lys-125, Asp-127, Ala-155, and Lys-156 each contribute to the GTP site. GDP contacts are provided by Asn-124, Lys-125, Asp-127, Ala-155, and Lys-156. At Ser-179 the chain carries Phosphoserine. At Thr-187 the chain carries Phosphothreonine. S-geranylgeranyl cysteine attachment occurs at residues Cys-200 and Cys-201.

Belongs to the small GTPase superfamily. Rab family. Interacts (preferentially in its GTP-bound form) with GCC2 (via its GRIP domain). Interacts (GTP-bound form) with SGSM1; the GDP-bound form has much lower affinity for SGSM1. Interacts with SGSM2. The GTP-bound form but not the GDP-bound form interacts with HPS4 and BLOC-3 complex (heterodimer of HPS1 and HPS4) but does not interact with HPS1 alone. Interacts (GTP-bound form) with NDE1; two RAB9A-GTP molecules lie on the opposite sides of the NDE1 homodimer; the interaction leads to RAB9A-dynein motor tethering. Interacts (GTP-bound form) with NDEL1. It depends on Mg(2+) as a cofactor.

Its subcellular location is the cell membrane. The protein localises to the endoplasmic reticulum membrane. The protein resides in the golgi apparatus membrane. It is found in the late endosome. It localises to the cytoplasmic vesicle. Its subcellular location is the phagosome membrane. The protein localises to the phagosome. The protein resides in the cytoplasmic vesicle membrane. It is found in the melanosome. The enzyme catalyses GTP + H2O = GDP + phosphate + H(+). Its activity is regulated as follows. Regulated by guanine nucleotide exchange factors (GEFs) which promote the exchange of bound GDP for free GTP. Regulated by GTPase activating proteins (GAPs) which increase the GTP hydrolysis activity. Inhibited by GDP dissociation inhibitors (GDIs). Its function is as follows. The small GTPases Rab are key regulators of intracellular membrane trafficking, from the formation of transport vesicles to their fusion with membranes. Rabs cycle between an inactive GDP-bound form and an active GTP-bound form that is able to recruit to membranes different sets of downstream effectors directly responsible for vesicle formation, movement, tethering and fusion. RAB9A is involved in the transport of proteins between the endosomes and the trans-Golgi network (TGN). Specifically uses NDE1/NDEL1 as an effector to interact with the dynein motor complex in order to control retrograde trafficking of RAB9-associated late endosomes to the TGN. Involved in the recruitment of SGSM2 to melanosomes and is required for the proper trafficking of melanogenic enzymes TYR, TYRP1 and DCT/TYRP2 to melanosomes in melanocytes. The polypeptide is Ras-related protein Rab-9A (Homo sapiens (Human)).